Here is a 121-residue protein sequence, read N- to C-terminus: Ribulose bisphosphate carboxylase small subunit (121 aa).

It belongs to the RuBisCO small chain family. As to quaternary structure, heterohexadecamer of 8 large and 8 small subunits.

Its function is as follows. RuBisCO catalyzes two reactions: the carboxylation of D-ribulose 1,5-bisphosphate, the primary event in carbon dioxide fixation, as well as the oxidative fragmentation of the pentose substrate. Both reactions occur simultaneously and in competition at the same active site. Although the small subunit is not catalytic it is essential for maximal activity. In Alvinoconcha hessleri symbiotic bacterium, this protein is Ribulose bisphosphate carboxylase small subunit.